Consider the following 78-residue polypeptide: Large ribosomal subunit protein bL28 (78 aa).

The tract at residues 1–21 (MSRVCQVTGKRPMVGNNRSHA) is disordered.

It belongs to the bacterial ribosomal protein bL28 family.

The polypeptide is Large ribosomal subunit protein bL28 (Shewanella halifaxensis (strain HAW-EB4)).